A 380-amino-acid chain; its full sequence is Cytochrome b (380 aa).

A run of 4 helical transmembrane segments spans residues 34-54, 78-99, 114-134, and 179-199; these read FGSL…LLAM, WLIR…YLHI, WNTG…GYVL, and FFAL…IHLT. Residues H84 and H98 each contribute to the heme b site. Positions 183 and 197 each coordinate heme b. H202 contacts a ubiquinone. The next 4 membrane-spanning stretches (helical) occupy residues 227–247, 289–309, 321–341, and 348–368; these read LKDI…ALFS, LGGV…PLLH, LSQL…WIGS, and FIII…VLFP.

This sequence belongs to the cytochrome b family. The cytochrome bc1 complex contains 11 subunits: 3 respiratory subunits (MT-CYB, CYC1 and UQCRFS1), 2 core proteins (UQCRC1 and UQCRC2) and 6 low-molecular weight proteins (UQCRH/QCR6, UQCRB/QCR7, UQCRQ/QCR8, UQCR10/QCR9, UQCR11/QCR10 and a cleavage product of UQCRFS1). This cytochrome bc1 complex then forms a dimer. The cofactor is heme b.

Its subcellular location is the mitochondrion inner membrane. Its function is as follows. Component of the ubiquinol-cytochrome c reductase complex (complex III or cytochrome b-c1 complex) that is part of the mitochondrial respiratory chain. The b-c1 complex mediates electron transfer from ubiquinol to cytochrome c. Contributes to the generation of a proton gradient across the mitochondrial membrane that is then used for ATP synthesis. The protein is Cytochrome b (MT-CYB) of Thalassarche impavida (Albatross).